A 326-amino-acid chain; its full sequence is tRNA(Ile)-lysidine synthase (326 aa).

25–30 (SGGQDS) contacts ATP.

The protein belongs to the tRNA(Ile)-lysidine synthase family.

The protein localises to the cytoplasm. It carries out the reaction cytidine(34) in tRNA(Ile2) + L-lysine + ATP = lysidine(34) in tRNA(Ile2) + AMP + diphosphate + H(+). Its function is as follows. Ligates lysine onto the cytidine present at position 34 of the AUA codon-specific tRNA(Ile) that contains the anticodon CAU, in an ATP-dependent manner. Cytidine is converted to lysidine, thus changing the amino acid specificity of the tRNA from methionine to isoleucine. The protein is tRNA(Ile)-lysidine synthase of Prochlorococcus marinus (strain NATL1A).